Here is a 577-residue protein sequence, read N- to C-terminus: Proline--tRNA ligase (577 aa).

This sequence belongs to the class-II aminoacyl-tRNA synthetase family. ProS type 1 subfamily. In terms of assembly, homodimer.

The protein localises to the cytoplasm. It carries out the reaction tRNA(Pro) + L-proline + ATP = L-prolyl-tRNA(Pro) + AMP + diphosphate. Functionally, catalyzes the attachment of proline to tRNA(Pro) in a two-step reaction: proline is first activated by ATP to form Pro-AMP and then transferred to the acceptor end of tRNA(Pro). As ProRS can inadvertently accommodate and process non-cognate amino acids such as alanine and cysteine, to avoid such errors it has two additional distinct editing activities against alanine. One activity is designated as 'pretransfer' editing and involves the tRNA(Pro)-independent hydrolysis of activated Ala-AMP. The other activity is designated 'posttransfer' editing and involves deacylation of mischarged Ala-tRNA(Pro). The misacylated Cys-tRNA(Pro) is not edited by ProRS. This chain is Proline--tRNA ligase, found in Limosilactobacillus reuteri (strain DSM 20016) (Lactobacillus reuteri).